The following is a 247-amino-acid chain: MKNENLQQKHQTVSSPIVVALDYASQQAALSFVDRIDPQDCRLKVGKEMFTLFGPQFVQTLQQRGFDVFLDLKFHDIPNTVAHAVAAAADLGVWMVNVHASGGSRMMVAAKEALVPFGNDAPLLIAVTVLTSMDEDDLRGLGITVSPAEQAERLAVLTHNSGLDGVVCSAHEAQRLKQVCGQAFKLVTPGIRPAGSDVGDQRRIMTPVQAQQAGVDYMVIGRPITQSADPAQTLREIRVSLLNGASS.

Residues aspartate 22, lysine 44, 71 to 80 (DLKFHDIPNT), threonine 131, arginine 192, glutamine 201, glycine 221, and arginine 222 contribute to the substrate site. The active-site Proton donor is the lysine 73.

It belongs to the OMP decarboxylase family. Type 1 subfamily. As to quaternary structure, homodimer.

The catalysed reaction is orotidine 5'-phosphate + H(+) = UMP + CO2. Its pathway is pyrimidine metabolism; UMP biosynthesis via de novo pathway; UMP from orotate: step 2/2. Functionally, catalyzes the decarboxylation of orotidine 5'-monophosphate (OMP) to uridine 5'-monophosphate (UMP). The polypeptide is Orotidine 5'-phosphate decarboxylase (Pectobacterium carotovorum subsp. carotovorum (strain PC1)).